Here is a 121-residue protein sequence, read N- to C-terminus: Small ribosomal subunit protein uS13 (121 aa).

The disordered stretch occupies residues 91 to 121 (HRMSLPVRGQRTRTNARTRRGSRKTVAGRKK). The segment covering 100–121 (QRTRTNARTRRGSRKTVAGRKK) has biased composition (basic residues).

The protein belongs to the universal ribosomal protein uS13 family. Part of the 30S ribosomal subunit. Forms a loose heterodimer with protein S19. Forms two bridges to the 50S subunit in the 70S ribosome.

Located at the top of the head of the 30S subunit, it contacts several helices of the 16S rRNA. In the 70S ribosome it contacts the 23S rRNA (bridge B1a) and protein L5 of the 50S subunit (bridge B1b), connecting the 2 subunits; these bridges are implicated in subunit movement. Contacts the tRNAs in the A and P-sites. This is Small ribosomal subunit protein uS13 from Prochlorococcus marinus (strain SARG / CCMP1375 / SS120).